The following is a 346-amino-acid chain: CLOCK-interacting pacemaker (346 aa).

Residues 1–42 show a composition bias toward basic and acidic residues; the sequence is MEKNQKCATEQERFKARSGHGDGQRAEPRKTQTTTESDKDSG. Disordered stretches follow at residues 1 to 83 and 167 to 228; these read MEKN…SQPQ and CARK…KELD. The span at 50-68 shows a compositional bias: polar residues; it reads CLSSVEQTDTEEGPTTSRW. A compositionally biased stretch (basic residues) spans 179-192; that stretch reads NQTKRQCSKGHSGS. The span at 205–222 shows a compositional bias: polar residues; it reads GVQQGPVDQNVKESSVSA. A coiled-coil region spans residues 283-315; it reads MKTKELARHNQATQSQLEKLQEQVQLYATAMSS.

It localises to the nucleus. The protein resides in the cytoplasm. The protein localises to the cytosol. In terms of biological role, transcriptional repressor which acts as a negative-feedback regulator of CLOCK-BMAL1 transcriptional activity in the circadian-clock mechanism. The physiological relevance of these observations is unsure. The polypeptide is CLOCK-interacting pacemaker (cipc) (Xenopus laevis (African clawed frog)).